Reading from the N-terminus, the 1135-residue chain is Envelopment polyprotein (1135 aa).

An N-terminal signal peptide occupies residues 1 to 35 (MRILKLLELVVKVSLFTIALSSVLLAFLIFRATDA). Residues 36–314 (KVEIIRGDHP…KYSKSIYKQT (279 aa)) lie on the Lumenal side of the membrane. The Cell attachment site motif lies at 41-43 (RGD). Intrachain disulfides connect Cys-114–Cys-145 and Cys-122–Cys-156. Asn-116 carries an N-linked (GlcNAc...) asparagine; by host glycan. Residues 177–195 (LDNKRHFSVGTKFFISESL) are non-covalent dimerization. An N-linked (GlcNAc...) asparagine; by host glycan is attached at Asn-210. Residues Cys-224 and Cys-285 are joined by a disulfide bond. A helical transmembrane segment spans residues 315–366 (ACINFSWIRLILIALLIYFPIRWLVNKTTKPLFLWYDLIGLITYPILLLINC). Over 367-484 (LWKYFPFKCS…VPGCPFLVTS (118 aa)) the chain is Cytoplasmic. A signal for signal peptide peptidase region spans residues 437 to 484 (LSFSLLKFVTEILIGLIILSQMPMSMAQTTQCLSGCFYVPGCPFLVTS). The Lumenal portion of the chain corresponds to 485–1067 (KFEKCPERDQ…YFGSFFDTIR (583 aa)). Residues Asn-588, Asn-605, and Asn-980 are each glycosylated (N-linked (GlcNAc...) asparagine; by host). The chain crosses the membrane as a helical span at residues 1068–1088 (VILLIAFIFLVIYFCSILTTI). Over 1089 to 1135 (CKGYVKNESYKSRSKIEDDDDSEIKAPMLMKDTMTRRRPPMDFSHLV) the chain is Cytoplasmic.

This sequence belongs to the tospovirus envelope glycoprotein family. Homodimer; disulfide-linked. Heterodimer with Glycoprotein C. Interacts with nucleoprotein. In terms of assembly, heterodimer with Glycoprotein N. Interacts with nucleoprotein. In terms of processing, specific enzymatic cleavages in vivo yield mature proteins including Glycoprotein N and Glycoprotein C. Glycosylated with O-linked glycans. Glycosylation is essential for proper subcellular location. Post-translationally, cleaved at acidic pH.

It localises to the virion membrane. Its subcellular location is the host Golgi apparatus membrane. The protein localises to the host endoplasmic reticulum membrane. Forms the spikes present at the surface of the virion together with Glycoprotein C. They are able to attach the virion to a cell receptor and to promote fusion of membranes after endocytosis of the virion. Plays a role in virus binding and/or entry into the vector midgut. Functionally, forms the spikes present at the surface of the virion together with Glycoprotein N. They are able to attach the virion to a cell receptor and to promote fusion of membranes after endocytosis of the virion. Probable class II fusion protein. The protein is Envelopment polyprotein (GP) of Tomato spotted wilt virus (strain Regular2A) (TSWV).